The chain runs to 134 residues: MGKDTIANIITSIRNADMNRKGMVRIPATNITENIVKILLREGFIENVRKHRESNKDFWVLTLRHRRNRKGPYKTILNLKRISRPGLRIYSNYQKIPRILGGMGIVILSTSRGIMTDREARLQGIGGEILCYIW.

Belongs to the universal ribosomal protein uS8 family. In terms of assembly, part of the 30S ribosomal subunit.

Its subcellular location is the plastid. It localises to the chloroplast. One of the primary rRNA binding proteins, it binds directly to 16S rRNA central domain where it helps coordinate assembly of the platform of the 30S subunit. In Cucumis sativus (Cucumber), this protein is Small ribosomal subunit protein uS8c (rps8).